A 617-amino-acid chain; its full sequence is Proline--tRNA ligase (617 aa).

The protein belongs to the class-II aminoacyl-tRNA synthetase family. ProS type 1 subfamily. As to quaternary structure, homodimer.

It is found in the cytoplasm. It carries out the reaction tRNA(Pro) + L-proline + ATP = L-prolyl-tRNA(Pro) + AMP + diphosphate. Functionally, catalyzes the attachment of proline to tRNA(Pro) in a two-step reaction: proline is first activated by ATP to form Pro-AMP and then transferred to the acceptor end of tRNA(Pro). As ProRS can inadvertently accommodate and process non-cognate amino acids such as alanine and cysteine, to avoid such errors it has two additional distinct editing activities against alanine. One activity is designated as 'pretransfer' editing and involves the tRNA(Pro)-independent hydrolysis of activated Ala-AMP. The other activity is designated 'posttransfer' editing and involves deacylation of mischarged Ala-tRNA(Pro). The misacylated Cys-tRNA(Pro) is not edited by ProRS. The protein is Proline--tRNA ligase of Streptococcus agalactiae serotype III (strain NEM316).